A 270-amino-acid chain; its full sequence is uncharacterized protein (270 aa).

The protein resides in the cytoplasm. This is an uncharacterized protein from Schizosaccharomyces pombe (strain 972 / ATCC 24843) (Fission yeast).